Here is a 1120-residue protein sequence, read N- to C-terminus: Transcription-repair-coupling factor (1120 aa).

Residues 591-756 (DLSNGMLMDR…MTGLKELSII (166 aa)) form the Helicase ATP-binding domain. An ATP-binding site is contributed by 604 to 611 (GDVGFGKT). The short motif at 709–712 (DEEQ) is the DEEQ box element. A Helicase C-terminal domain is found at 777–931 (IIRDALLHEH…GFTIASHDMD (155 aa)).

This sequence in the N-terminal section; belongs to the UvrB family. In the C-terminal section; belongs to the helicase family. RecG subfamily.

The protein localises to the cytoplasm. In terms of biological role, couples transcription and DNA repair by recognizing RNA polymerase (RNAP) stalled at DNA lesions. Mediates ATP-dependent release of RNAP and its truncated transcript from the DNA, and recruitment of nucleotide excision repair machinery to the damaged site. In Rickettsia bellii (strain RML369-C), this protein is Transcription-repair-coupling factor.